A 448-amino-acid chain; its full sequence is O-Mevalon transferase yanI (448 aa).

Residue N2 is glycosylated (N-linked (GlcNAc...) asparagine). The next 8 helical transmembrane spans lie at 21 to 41 (VLLS…LLAV), 54 to 74 (YGLL…PPPP), 79 to 96 (AVLY…ARYF), 165 to 185 (FVTA…LVEV), 217 to 237 (LIVL…VLPL), 316 to 336 (MLML…SYHV), 350 to 370 (VKYF…CWLL), and 390 to 410 (IVTA…PVAL).

This sequence belongs to the wax synthase family.

The protein resides in the membrane. It participates in secondary metabolite biosynthesis; terpenoid biosynthesis. Functionally, O-Mevalon transferase yanI; part of the gene cluster that mediates the biosynthesis of yanuthone D, a fungal isoprenoid epoxycyclohexenone that acts as an antibiotic against fungi and bacteria. The first step of the pathway is the synthesis of 6-methylsalicylic acid (6-MSA) by the polyketide synthase yanA. 6-MSA is then converted to m-cresol by the decarboxylase yanB. The cytochrome P450 monooxygenase yanC then catalyzes the oxidation of m-cresol to toluquinol. Epoxidation of toluquinol is then performed by the short chain dehydrogenase yanD, with the help of yanE, and a further prenylation by yanG leads to 7-deacetoxyyanuthone A. The next step is the hydroxylation of C-22 of 7-deacetoxyyanuthone A by the cytochrome P450 monooxygenase yanH to yield 22-deacetylyanuthone A. O-Mevalon transferase yanI then attaches mevalon to the hydroxyl group of 22-deacetylyanuthone A to produce yanuthone E. Finally, the FAD-dependent monooxygenase yanF oxidizes the hydroxyl group at C15 of yanuthone E to form yanuthone D. Furthermore, several branching points in the pathway lead to the production of yanuthones F and G from 7-deacetoxyyanuthone A; yanuthones H and I from 22-deacetylyanuthone A; and yanuthone J from yanuthone E. The polypeptide is O-Mevalon transferase yanI (Aspergillus niger (strain ATCC 1015 / CBS 113.46 / FGSC A1144 / LSHB Ac4 / NCTC 3858a / NRRL 328 / USDA 3528.7)).